Reading from the N-terminus, the 1863-residue chain is Breast cancer type 1 susceptibility protein homolog (1863 aa).

Methionine 1 is subject to N-acetylmethionine. The RING-type zinc finger occupies 24–65 (CPICLELIKEPVSTKCDHIFCKFCMLKLLNQKKGPSQCPLCK). Residue lysine 109 forms a Glycyl lysine isopeptide (Lys-Gly) (interchain with G-Cter in SUMO2) linkage. Phosphoserine is present on serine 114. Residues 231–267 (TDVTNTEHHQPSNNDLNTTEKRATERHPEKYQGSSVS) form a disordered region. Residues 248-260 (TTEKRATERHPEK) show a composition bias toward basic and acidic residues. A Glycyl lysine isopeptide (Lys-Gly) (interchain with G-Cter in SUMO2) cross-link involves residue lysine 301. The segment at 306–338 (NKSKQPGLARSQHNRWAGSKETCNDRQTPSTEK) is disordered. Lysine 339 participates in a covalent cross-link: Glycyl lysine isopeptide (Lys-Gly) (interchain with G-Cter in SUMO2). 4 positions are modified to phosphoserine: serine 395, serine 398, serine 423, and serine 434. Residues lysine 443, lysine 459, and lysine 519 each participate in a glycyl lysine isopeptide (Lys-Gly) (interchain with G-Cter in SUMO2) cross-link. At serine 551 the chain carries Phosphoserine. Residues lysine 583 and lysine 654 each participate in a glycyl lysine isopeptide (Lys-Gly) (interchain with G-Cter in SUMO2) cross-link. Residues 650–735 (IKKKKYNQMP…LPREEKEEKL (86 aa)) form a disordered region. Serine 694, serine 708, and serine 725 each carry phosphoserine. Residues 705 to 716 (APGSFTNCSNTS) show a composition bias toward polar residues. Residues lysine 734 and lysine 739 each participate in a glycyl lysine isopeptide (Lys-Gly) (interchain with G-Cter in SUMO2) cross-link. Phosphoserine is present on residues serine 753 and serine 840. Glycyl lysine isopeptide (Lys-Gly) (interchain with G-Cter in SUMO2) cross-links involve residues lysine 918 and lysine 987. Position 988 is a phosphoserine; by CHEK2 (serine 988). A Phosphoserine modification is found at serine 1009. Residues 1045–1066 (NEVGSSTNEVGSSINEVGSSDE) are disordered. Lysine 1079 participates in a covalent cross-link: Glycyl lysine isopeptide (Lys-Gly) (interchain with G-Cter in SUMO2). Serine 1143, serine 1189, serine 1191, serine 1211, serine 1217, serine 1218, serine 1280, serine 1328, serine 1336, serine 1342, and serine 1387 each carry phosphoserine. The tract at residues 1181 to 1216 (VQRGELSRSPSPFTHTHLAQGYRRGAKKLESSEENL) is disordered. The interval 1322–1394 (KQMRHQSESQ…LSSQSDILTT (73 aa)) is disordered. A compositionally biased stretch (acidic residues) spans 1342–1360 (SDDEERGTDLEENNQEEQG). Residues 1373-1394 (ESETSVSEDCSGLSSQSDILTT) show a composition bias toward polar residues. A Phosphothreonine modification is found at threonine 1394. The interval 1397–1424 (RDTMQDNLIKLQQEMAELEAVLEQHGSQ) is interaction with PALB2. Serine 1423, serine 1457, serine 1524, and serine 1542 each carry phosphoserine. The interval 1440 to 1504 (EDLRNPEQST…RSSPSKCPSL (65 aa)) is disordered. The segment covering 1445–1470 (PEQSTSEKAVLTSQKSSEYPISQNPE) has biased composition (polar residues). Disordered stretches follow at residues 1540–1597 (EESG…PSST) and 1610–1642 (SAQS…LTAS). Over residues 1610-1624 (SAQSPAAAQTTNTAG) the composition is skewed to polar residues. BRCT domains follow at residues 1642 to 1736 (STER…DFEV) and 1756 to 1855 (QDRK…TYLI).

In terms of assembly, heterodimer with BARD1. Part of the BRCA1-associated genome surveillance complex (BASC), which contains BRCA1, MSH2, MSH6, MLH1, ATM, BLM, PMS2 and the MRE11-RAD50-NBN protein (MRN) complex. This association could be a dynamic process changing throughout the cell cycle and within subnuclear domains. Component of the BRCA1-A complex, at least composed of BRCA1, BARD1, UIMC1/RAP80, ABRAXAS1, BRCC3/BRCC36, BABAM2 and BABAM1/NBA1. Interacts (via the BRCT domains) with ABRAXAS1 (phosphorylated form); this is important for recruitment to sites of DNA damage. Can form a heterotetramer with two molecules of ABRAXAS1 (phosphorylated form). Component of the BRCA1-RBBP8 complex. Interacts (via the BRCT domains) with RBBP8 ('Ser-327' phosphorylated form); the interaction ubiquitinates RBBP8, regulates CHEK1 activation, and involves RBBP8 in BRCA1-dependent G2/M checkpoint control on DNA damage. Associates with RNA polymerase II holoenzyme. Interacts with SMC1A, NELFB, DCLRE1C, CLSPN. CHEK1, CHEK2, BAP1, BRCC3, UBXN1 and PCLAF. Interacts (via BRCT domains) with BRIP1 (phosphorylated form). Interacts with FANCD2 (ubiquitinated form). Interacts with H2AX (phosphorylated on 'Ser-140'). Interacts (via the BRCT domains) with ACACA (phosphorylated form); the interaction prevents dephosphorylation of ACACA. Part of a BRCA complex containing BRCA1, BRCA2 and PALB2. Interacts directly with PALB2; the interaction is essential for its function in HRR. Interacts directly with BRCA2; the interaction occurs only in the presence of PALB2 which serves as the bridging protein. Interacts (via the BRCT domains) with LMO4; the interaction represses the transcriptional activity of BRCA1. Interacts (via the BRCT domains) with CCAR2 (via N-terminus); the interaction represses the transcriptional activator activity of BRCA1. Interacts with EXD2. Interacts (via C-terminus) with DHX9; this interaction is direct and links BRCA1 to the RNA polymerase II holoenzyme. Interacts with DNA helicase ZGRF1; the interaction is increased following DNA damage induction. In terms of processing, phosphorylated in response to IR, UV, and various stimuli that cause checkpoint activation, probably by ATM or ATR. Phosphorylation at Ser-988 by CHEK2 regulates mitotic spindle assembly. Phosphorylation by AURKA regulates centrosomal microtubule nucleation. Autoubiquitinated, undergoes 'Lys-6'-linked polyubiquitination. 'Lys-6'-linked polyubiquitination does not promote degradation.

Its subcellular location is the nucleus. It localises to the chromosome. The protein resides in the cytoplasm. It catalyses the reaction S-ubiquitinyl-[E2 ubiquitin-conjugating enzyme]-L-cysteine + [acceptor protein]-L-lysine = [E2 ubiquitin-conjugating enzyme]-L-cysteine + N(6)-ubiquitinyl-[acceptor protein]-L-lysine.. It functions in the pathway protein modification; protein ubiquitination. E3 ubiquitin-protein ligase that specifically mediates the formation of 'Lys-6'-linked polyubiquitin chains and plays a central role in DNA repair by facilitating cellular responses to DNA damage. It is unclear whether it also mediates the formation of other types of polyubiquitin chains. The BRCA1-BARD1 heterodimer coordinates a diverse range of cellular pathways such as DNA damage repair, ubiquitination and transcriptional regulation to maintain genomic stability. Regulates centrosomal microtubule nucleation. Required for appropriate cell cycle arrests after ionizing irradiation in both the S-phase and the G2 phase of the cell cycle. Required for FANCD2 targeting to sites of DNA damage. Inhibits lipid synthesis by binding to inactive phosphorylated ACACA and preventing its dephosphorylation. Contributes to homologous recombination repair (HRR) via its direct interaction with PALB2, fine-tunes recombinational repair partly through its modulatory role in the PALB2-dependent loading of BRCA2-RAD51 repair machinery at DNA breaks. Component of the BRCA1-RBBP8 complex which regulates CHEK1 activation and controls cell cycle G2/M checkpoints on DNA damage via BRCA1-mediated ubiquitination of RBBP8. Acts as a transcriptional activator. The chain is Breast cancer type 1 susceptibility protein homolog (BRCA1) from Pongo pygmaeus (Bornean orangutan).